Reading from the N-terminus, the 94-residue chain is DNA-binding protein HU (94 aa).

The tract at residues 55 to 94 (RAERPGRNPKTGEPIMIAASNNPSFKPGKALKDAVKSSAG) is disordered. The segment covering 84 to 94 (ALKDAVKSSAG) has biased composition (basic and acidic residues).

Belongs to the bacterial histone-like protein family.

Functionally, histone-like DNA-binding protein which is capable of wrapping DNA to stabilize it, and thus to prevent its denaturation under extreme environmental conditions. The sequence is that of DNA-binding protein HU (hup) from Xylella fastidiosa (strain Temecula1 / ATCC 700964).